The chain runs to 886 residues: Neurotrophin 1 (886 aa).

Positions 1–29 (MKAGRAFGCLFWALLYCVLYLDLVSGNSA) are cleaved as a signal peptide. Positions 30-498 (DDELMDFDFA…FDDFSLSKKR (469 aa)) are excised as a propeptide. N-linked (GlcNAc...) asparagine glycans are attached at residues Asn-267 and Asn-317. Residues 321 to 340 (FQQPSSQEEEKMASSNGGQS) are disordered. Residue Asn-353 is glycosylated (N-linked (GlcNAc...) asparagine). The disordered stretch occupies residues 369-436 (RNSAEETEEP…HKPVVTPPNK (68 aa)). The Spaetzle domain maps to 508–597 (MCQSVVRYAR…KVPTCCSCQV (90 aa)). Intrachain disulfides connect Cys-509-Cys-564, Cys-546-Cys-593, and Cys-553-Cys-595. Asn-623 carries N-linked (GlcNAc...) asparagine glycosylation. Disordered regions lie at residues 675-754 (PGIS…QYHR) and 789-886 (VSAP…QSIQ). Residues 698 to 710 (YKSSSSSSKKYYS) are compositionally biased toward low complexity. The segment covering 797 to 807 (PAPPLPMPPMP) has biased composition (pro residues). Composition is skewed to basic residues over residues 815 to 827 (HQAH…HHLH) and 874 to 886 (SRRH…QSIQ).

In terms of assembly, homodimer; disulfide-linked. In terms of tissue distribution, detected in the fan-shaped body which is a component of the locomotion center in the central nervous system (CNS) (at protein level). Expressed in the optic lobes and brain.

Neurotrophin which may function as a ligand for the Toll-related receptors Toll-7 and Tollo. Binds to Toll-7 and probably acts as its ligand in promoting motor axon targeting and neuronal survival in the central nervous system (CNS). Involved in synaptic targeting of ISNb/d motorneurons and also some SNa motorneurons. In larvae, involved in the negative regulation of the tracheal immune response to bacterial infection perhaps by acting as a ligand for the Toll-related receptor Tollo. May be involved in the normal development of specific neurons at the neuromuscular junction. In Drosophila melanogaster (Fruit fly), this protein is Neurotrophin 1.